A 227-amino-acid chain; its full sequence is Lysosomal-associated transmembrane protein 4B (227 aa).

The next 4 membrane-spanning stretches (helical) occupy residues 26–46 (ILLG…LLSA), 72–92 (MCIA…ATYG), 100–120 (WIIP…LVAI), and 153–173 (CLVL…GYLI). The tract at residues 205–222 (PPYDDATAVTGTAKEPPP) is required for NEDD4 interaction.

It belongs to the LAPTM4/LAPTM5 transporter family. Homooligomer; upon reaching the lysosomes. Interacts with MCOLN1. Interacts with NEDD4; may play a role in the lysosomal sorting of LAPTM4B; enhances HGS association with NEDD4; mediates inhibition of EGFR degradation. Interacts with PIP5K1C; promotes SNX5 association with LAPTM4B; kinase activity of PIP5K1C is required; interaction is regulated by phosphatidylinositol 4,5-bisphosphate generated by PIP5K1C. Interacts with HGS; promotes HGS ubiquitination. Interacts with SNX5. Interacts with SLC3A2 and SLC7A5; recruits SLC3A2 and SLC7A5 to lysosomes to promote leucine uptake into these organelles and is required for mTORC1 activation. Interacts with LRRC32; decreases TGFB1 production in regulatory T cells. Interacts with BECN1; competes with EGFR for LAPTM4B binding; regulates EGFR activity. Interacts with EGFR; positively correlates with EGFR activation. Post-translationally, undergoes proteolytic cleavage following delivery to the lysosomes. In terms of processing, ubiquitinated by NEDD4.

The protein resides in the endomembrane system. It localises to the late endosome membrane. It is found in the cell membrane. The protein localises to the cell projection. Its subcellular location is the lysosome membrane. The protein resides in the endosome membrane. It localises to the endosome. It is found in the multivesicular body membrane. The protein localises to the multivesicular body lumen. Functionally, required for optimal lysosomal function. Blocks EGF-stimulated EGFR intraluminal sorting and degradation. Conversely by binding with the phosphatidylinositol 4,5-bisphosphate, regulates its PIP5K1C interaction, inhibits HGS ubiquitination and relieves LAPTM4B inhibition of EGFR degradation. Recruits SLC3A2 and SLC7A5 (the Leu transporter) to the lysosome, promoting entry of leucine and other essential amino acid (EAA) into the lysosome, stimulating activation of proton-transporting vacuolar (V)-ATPase protein pump (V-ATPase) and hence mTORC1 activation. Plays a role as negative regulator of TGFB1 production in regulatory T cells. Binds ceramide and facilitates its exit from late endosome in order to control cell death pathways. The polypeptide is Lysosomal-associated transmembrane protein 4B (Rattus norvegicus (Rat)).